The sequence spans 472 residues: 3-isopropylmalate dehydratase large subunit (472 aa).

[4Fe-4S] cluster-binding residues include cysteine 347, cysteine 409, and cysteine 412.

It belongs to the aconitase/IPM isomerase family. LeuC type 1 subfamily. Heterodimer of LeuC and LeuD. Requires [4Fe-4S] cluster as cofactor.

The enzyme catalyses (2R,3S)-3-isopropylmalate = (2S)-2-isopropylmalate. It functions in the pathway amino-acid biosynthesis; L-leucine biosynthesis; L-leucine from 3-methyl-2-oxobutanoate: step 2/4. Its function is as follows. Catalyzes the isomerization between 2-isopropylmalate and 3-isopropylmalate, via the formation of 2-isopropylmaleate. This chain is 3-isopropylmalate dehydratase large subunit, found in Salinibacter ruber (strain DSM 13855 / M31).